The primary structure comprises 152 residues: MESWLFLLLIALIAFVAKNQSLLIASVVVLALKALPNSAKIMSWLSDKGINLGVTIISITILVPIATGQIGLKDLIQSFKTPMGWLGILCGILVAVLSSKGVGLINQSPEITVALVFGTILGVVFLKGIAAGPIIASGMMYVIITTFQAFQH.

Helical transmembrane passes span 4 to 24, 52 to 72, 85 to 105, and 115 to 135; these read WLFL…SLLI, LGVT…QIGL, WLGI…VGLI, and LVFG…GPII.

The protein belongs to the UPF0756 family.

It is found in the cell membrane. The polypeptide is UPF0756 membrane protein EF_1246 (Enterococcus faecalis (strain ATCC 700802 / V583)).